A 390-amino-acid chain; its full sequence is Chorismate synthase (390 aa).

Residues Arg-39 and Arg-45 each coordinate NADP(+). FMN is bound by residues 132-134 (RSS), 253-254 (NA), Gly-298, 313-317 (KPIPT), and Arg-339.

It belongs to the chorismate synthase family. Homotetramer. FMNH2 is required as a cofactor.

The catalysed reaction is 5-O-(1-carboxyvinyl)-3-phosphoshikimate = chorismate + phosphate. The protein operates within metabolic intermediate biosynthesis; chorismate biosynthesis; chorismate from D-erythrose 4-phosphate and phosphoenolpyruvate: step 7/7. Its function is as follows. Catalyzes the anti-1,4-elimination of the C-3 phosphate and the C-6 proR hydrogen from 5-enolpyruvylshikimate-3-phosphate (EPSP) to yield chorismate, which is the branch point compound that serves as the starting substrate for the three terminal pathways of aromatic amino acid biosynthesis. This reaction introduces a second double bond into the aromatic ring system. In Bacillus velezensis (strain DSM 23117 / BGSC 10A6 / LMG 26770 / FZB42) (Bacillus amyloliquefaciens subsp. plantarum), this protein is Chorismate synthase.